The chain runs to 356 residues: Glutamine synthetase cytosolic isozyme (356 aa).

The GS beta-grasp domain maps to 19–99 (IIAEYIWIGG…VMCDAYTPAG (81 aa)). Positions 38 to 66 (RTLPGPVTDPSQLPKWNYDGSSTGQAPGE) are disordered. A GS catalytic domain is found at 106-356 (KRHAAAKIFS…IADTTILWKP (251 aa)).

It belongs to the glutamine synthetase family. In terms of assembly, homooctamer.

It localises to the cytoplasm. The enzyme catalyses L-glutamate + NH4(+) + ATP = L-glutamine + ADP + phosphate + H(+). This is Glutamine synthetase cytosolic isozyme from Medicago sativa (Alfalfa).